Consider the following 311-residue polypeptide: Protoheme IX farnesyltransferase (311 aa).

Helical transmembrane passes span 19–39 (VLAYIALTKPRVIELLLVATI), 55–75 (ILATLFGGWMGAASANTLNCV), 101–121 (NAFVFGVVLGLASFAWLWWQA), 123–143 (LLSGALVVATILFYVFVYTLG), 169–189 (AVTGTIGWPALALFGVIFFWT), 221–241 (VTKQIVIYTWLTVLTTLALVP), 242–262 (ATGVIYAAVALVAGAWFLLMA), and 290–310 (VVFCGLAVDSVLGWDTIGSFF).

It belongs to the UbiA prenyltransferase family. Protoheme IX farnesyltransferase subfamily.

Its subcellular location is the cell membrane. The enzyme catalyses heme b + (2E,6E)-farnesyl diphosphate + H2O = Fe(II)-heme o + diphosphate. The protein operates within porphyrin-containing compound metabolism; heme O biosynthesis; heme O from protoheme: step 1/1. Converts heme B (protoheme IX) to heme O by substitution of the vinyl group on carbon 2 of heme B porphyrin ring with a hydroxyethyl farnesyl side group. The polypeptide is Protoheme IX farnesyltransferase (Nocardia farcinica (strain IFM 10152)).